A 1268-amino-acid polypeptide reads, in one-letter code: SR-related and CTD-associated factor 8 (1268 aa).

The 139-residue stretch at 1-139 folds into the CID domain; it reads MEAVKTFNSE…PLLDMAAGIP (139 aa). Residue T6 is modified to Phosphothreonine. A Glycyl lysine isopeptide (Lys-Gly) (interchain with G-Cter in SUMO1) cross-link involves residue K18. The segment covering 270 to 283 has biased composition (basic and acidic residues); that stretch reads GEDSEHSEESKKEM. 3 disordered regions span residues 270–290, 322–355, and 385–469; these read GEDS…QLSH, QQQP…QQHF, and EIFE…PVRS. Position 273 is a phosphoserine (S273). Polar residues predominate over residues 327–354; it reads KVTPQDSQEGTFGSEHSASPSQGSSQQH. A compositionally biased stretch (basic residues) spans 394 to 443; that stretch reads VAVRSRSRTHSRSRSRSPRKRRSRSRSGSRKRKHRKRSRSHSREKKRKAS. The segment covering 447–461 has biased composition (basic and acidic residues); that stretch reads SSERRAREREKERQK. In terms of domain architecture, RRM spans 477 to 551; that stretch reads TTLWVGQVDK…KVIKIAWALN (75 aa). The residue at position 617 (S617) is a Phosphoserine. Residues 776–807 are disordered; that stretch reads QIPSGENTRPVIPSDIPSSAAMLAQPPGASST. Residues R915, R925, and R936 each carry the asymmetric dimethylarginine modification. Disordered stretches follow at residues 984–1012 and 1040–1065; these read PGRP…EGDR and RLDP…PVDM. Position 1071 is an asymmetric dimethylarginine (R1071). The tract at residues 1199–1268 is disordered; the sequence is ATSQRKGDNV…VVESTETEGT (70 aa). Low complexity predominate over residues 1249–1262; that stretch reads GTVAGVESEAVVES.

In terms of assembly, interacts with POLR2A; via C-terminal heptapeptide repeat domain (CTD) phosphorylated at 'Ser-2' and 'Ser-5'. Identified in a complex with CDC5L and other spliceosomal proteins.

The protein localises to the nucleus. It is found in the nucleus matrix. Anti-terminator protein required to prevent early mRNA termination during transcription. Together with SCAF4, acts by suppressing the use of early, alternative poly(A) sites, thereby preventing the accumulation of non-functional truncated proteins. Mechanistically, associates with the phosphorylated C-terminal heptapeptide repeat domain (CTD) of the largest RNA polymerase II subunit (POLR2A), and subsequently binds nascent RNA upstream of early polyadenylation sites to prevent premature mRNA transcript cleavage and polyadenylation. Independently of SCAF4, also acts as a positive regulator of transcript elongation. The polypeptide is SR-related and CTD-associated factor 8 (Mus musculus (Mouse)).